The following is a 29-amino-acid chain: Trypsin inhibitor 1 (29 aa).

Cystine bridges form between Cys-3–Cys-20, Cys-10–Cys-22, and Cys-16–Cys-28.

Belongs to the protease inhibitor I7 (squash-type serine protease inhibitor) family.

The protein resides in the secreted. In terms of biological role, inhibits trypsin. The protein is Trypsin inhibitor 1 of Luffa aegyptiaca (Sponge gourd).